Consider the following 561-residue polypeptide: Acylcarnitine hydrolase (561 aa).

A signal peptide spans 1–26; the sequence is MTRNQLHNWLNAGFFGLLLLLIHVQG. A disulfide bond links cysteine 97 and cysteine 125. The Acyl-ester intermediate role is filled by serine 230. A disulfide bridge links cysteine 282 with cysteine 293. Catalysis depends on charge relay system residues glutamate 347 and histidine 459. The Prevents secretion from ER signature appears at 558 to 561; that stretch reads HREL.

The protein belongs to the type-B carboxylesterase/lipase family. Detected in liver (at protein level).

It localises to the microsome. The protein localises to the endoplasmic reticulum. The catalysed reaction is an O-acyl-(R)-carnitine + H2O = (R)-carnitine + a fatty acid + H(+). The enzyme catalyses all-trans-retinyl hexadecanoate + H2O = all-trans-retinol + hexadecanoate + H(+). Hydrolase with high activity towards palmitoylcarnitine. Is also active with p-nitrophenylacetate and alpha-naphthylacetate. May also hydrolyze retinyl esters. In Mus musculus (Mouse), this protein is Acylcarnitine hydrolase.